The primary structure comprises 381 residues: MSKQKVVVGMSGGVDSSVTAWLLKEQGYDVVGLFMKNWEDDDDSEYCSTRQDWIDVVSVADLIGIDVEAVNFAAEYKDRVFAEFLREYSAGRTPNPDVLCNAEIKFKAFLDHAMSLGAQTIATGHYARVRENNGRFELLKALDHTKDQSYFLHRLNQAQLSKTLFPLGEIPKTRVREIAEQIALPNAKKKDSTGICFIGERPFRDFLNRYLPTKPGPMKTTEGKVVGEHIGLAFYTFGQRKGIGLGGSKDGSGEPWFVAGKDIPSNTLYVAQGHDHPWLLSHTLSAGNTSWVAGEPPADGFACGAKTRYRQADAPCTFSSAGAGEGLFELNFDVAQWAVTPGQSAVLYDGDVCLGGGIIEHAVTGQPATRQPQKAALLTAR.

ATP is bound by residues 9–16 (GMSGGVDS) and Met35. The interaction with target base in tRNA stretch occupies residues 95–97 (NPD). The active-site Nucleophile is Cys100. A disulfide bond links Cys100 and Cys196. Gly124 is an ATP binding site. The interaction with tRNA stretch occupies residues 146 to 148 (KDQ). Cys196 acts as the Cysteine persulfide intermediate in catalysis. Residues 308–309 (RY) are interaction with tRNA.

This sequence belongs to the MnmA/TRMU family.

The protein localises to the cytoplasm. The enzyme catalyses S-sulfanyl-L-cysteinyl-[protein] + uridine(34) in tRNA + AH2 + ATP = 2-thiouridine(34) in tRNA + L-cysteinyl-[protein] + A + AMP + diphosphate + H(+). Catalyzes the 2-thiolation of uridine at the wobble position (U34) of tRNA, leading to the formation of s(2)U34. The sequence is that of tRNA-specific 2-thiouridylase MnmA from Paraburkholderia xenovorans (strain LB400).